The following is a 328-amino-acid chain: Ketol-acid reductoisomerase (NADP(+)) (328 aa).

The 181-residue stretch at 2 to 182 folds into the KARI N-terminal Rossmann domain; that stretch reads AKIYTDREAS…GATRAGVIET (181 aa). NADP(+) contacts are provided by residues 25 to 28, Arg-48, Ser-53, and 83 to 86; these read YGIQ and DMEQ. His-108 is a catalytic residue. Gly-134 is a binding site for NADP(+). A KARI C-terminal knotted domain is found at 183–328; sequence TFAEETETDL…EEMRKLLFGP (146 aa). 4 residues coordinate Mg(2+): Asp-191, Glu-195, Glu-227, and Glu-231. Ser-252 serves as a coordination point for substrate.

Belongs to the ketol-acid reductoisomerase family. It depends on Mg(2+) as a cofactor.

It carries out the reaction (2R)-2,3-dihydroxy-3-methylbutanoate + NADP(+) = (2S)-2-acetolactate + NADPH + H(+). The catalysed reaction is (2R,3R)-2,3-dihydroxy-3-methylpentanoate + NADP(+) = (S)-2-ethyl-2-hydroxy-3-oxobutanoate + NADPH + H(+). Its pathway is amino-acid biosynthesis; L-isoleucine biosynthesis; L-isoleucine from 2-oxobutanoate: step 2/4. It participates in amino-acid biosynthesis; L-valine biosynthesis; L-valine from pyruvate: step 2/4. Involved in the biosynthesis of branched-chain amino acids (BCAA). Catalyzes an alkyl-migration followed by a ketol-acid reduction of (S)-2-acetolactate (S2AL) to yield (R)-2,3-dihydroxy-isovalerate. In the isomerase reaction, S2AL is rearranged via a Mg-dependent methyl migration to produce 3-hydroxy-3-methyl-2-ketobutyrate (HMKB). In the reductase reaction, this 2-ketoacid undergoes a metal-dependent reduction by NADPH to yield (R)-2,3-dihydroxy-isovalerate. The protein is Ketol-acid reductoisomerase (NADP(+)) of Pyrobaculum aerophilum (strain ATCC 51768 / DSM 7523 / JCM 9630 / CIP 104966 / NBRC 100827 / IM2).